The chain runs to 180 residues: Bifunctional protein PyrR 1 (180 aa).

Substrate is bound by residues Thr-39–Arg-40, Asp-103–Thr-111, Arg-136, and Val-160. The PRPP-binding signature appears at Val-99 to Thr-111.

Belongs to the purine/pyrimidine phosphoribosyltransferase family. PyrR subfamily. Homodimer and homohexamer; in equilibrium.

It carries out the reaction UMP + diphosphate = 5-phospho-alpha-D-ribose 1-diphosphate + uracil. Its function is as follows. Regulates transcriptional attenuation of the pyrimidine nucleotide (pyr) operon by binding in a uridine-dependent manner to specific sites on pyr mRNA. This disrupts an antiterminator hairpin in the RNA and favors formation of a downstream transcription terminator, leading to a reduced expression of downstream genes. Also displays a weak uracil phosphoribosyltransferase activity which is not physiologically significant. This Lactiplantibacillus plantarum (strain ATCC BAA-793 / NCIMB 8826 / WCFS1) (Lactobacillus plantarum) protein is Bifunctional protein PyrR 1 (pyrR1).